A 508-amino-acid chain; its full sequence is Protein MGF 505-9R (508 aa).

3 ANK repeats span residues 54 to 83 (SINL…NLHY), 253 to 282 (QVDT…RKTV), and 313 to 343 (IIKK…KINL).

Belongs to the asfivirus MGF 505 family.

In terms of biological role, plays a role in virus cell tropism, and may be required for efficient virus replication in macrophages. The polypeptide is Protein MGF 505-9R (Ornithodoros (relapsing fever ticks)).